The sequence spans 347 residues: UDP-glucose 4-epimerase (347 aa).

NAD(+)-binding positions include 11–13 (GYI), 32–36 (DNFHN), 65–66 (DI), Phe-87, and Lys-91. Residue 131-133 (SAT) coordinates substrate. The Proton acceptor role is filled by Tyr-156. Residues Lys-160 and Tyr-184 each contribute to the NAD(+) site. Substrate-binding positions include 184–186 (YFN), 205–207 (NNL), 223–225 (NVF), Arg-238, and 299–302 (REGD).

It belongs to the NAD(P)-dependent epimerase/dehydratase family. As to quaternary structure, homodimer. Requires NAD(+) as cofactor.

The catalysed reaction is UDP-alpha-D-glucose = UDP-alpha-D-galactose. It carries out the reaction UDP-N-acetyl-alpha-D-glucosamine = UDP-N-acetyl-alpha-D-galactosamine. The protein operates within carbohydrate metabolism; galactose metabolism. Functionally, catalyzes two distinct but analogous reactions: the reversible epimerization of UDP-glucose to UDP-galactose and the reversible epimerization of UDP-N-acetylglucosamine to UDP-N-acetylgalactosamine. The reaction with UDP-Gal plays a critical role in the Leloir pathway of galactose catabolism in which galactose is converted to the glycolytic intermediate glucose 6-phosphate. It contributes to the catabolism of dietary galactose and enables the endogenous biosynthesis of both UDP-Gal and UDP-GalNAc when exogenous sources are limited. Both UDP-sugar interconversions are important in the synthesis of glycoproteins and glycolipids. In Mus musculus (Mouse), this protein is UDP-glucose 4-epimerase (Gale).